Reading from the N-terminus, the 490-residue chain is Limb region 1 protein homolog (490 aa).

At 1–19 the chain is on the extracellular side; it reads MEGQDEVSAREQHFHSQVR. The chain crosses the membrane as a helical span at residues 20-40; sequence ESTICFLLFAILYVVSYFIIT. The Cytoplasmic segment spans residues 41–62; it reads RYKRKSDEQEDEDAIVNRISLF. A helical membrane pass occupies residues 63–83; that stretch reads LSTFTLAVSAGAVLLLPFSII. At 84-110 the chain is on the extracellular side; it reads SNEILLSFPQNYYIQWLNGSLIHGLWN. The chain crosses the membrane as a helical span at residues 111–131; sequence LASLFSNLCLFVLMPFAFFFL. Residues 132–151 lie on the Cytoplasmic side of the membrane; sequence ESEGFAGLKKGIRARILETL. Residues 152–172 form a helical membrane-spanning segment; sequence VMLLLLALLILGIVWVASALI. Over 173-187 the chain is Extracellular; it reads DNDAASMESLYDLWE. A helical transmembrane segment spans residues 188-208; the sequence is FYLPYLYSCISLMGCLLLLLC. The Cytoplasmic segment spans residues 209-291; the sequence is TPVGLSRMFT…RKKASAWERN (83 aa). Residues 250 to 287 adopt a coiled-coil conformation; it reads RLNGLSSSVEYNIMELEQELENVKTLKTKLERRKKASA. Residues 292 to 312 traverse the membrane as a helical segment; sequence LVYPAVMVLLLIETSISVLLV. The Extracellular portion of the chain corresponds to 313–339; that stretch reads ACNILCLLVDETAMPKGTRGPGIGNAS. Residues 340–360 form a helical membrane-spanning segment; sequence LSTFGFVGAALEIILIFYLMV. Residues 361–383 are Cytoplasmic-facing; it reads SSVVGFYSLRFFGNFTPKKDDTT. A helical membrane pass occupies residues 384-404; that stretch reads MTKIIGNCVSILVLSSALPVM. Residues 405 to 426 are Extracellular-facing; that stretch reads SRTLGITRFDLLGDFGRFNWLG. The chain crosses the membrane as a helical span at residues 427–447; sequence NFYIVLSYNLLFAIVTTLCLV. The Cytoplasmic segment spans residues 448–490; it reads RKFTSAVREELFKALGLHKLHLPNTSRDSETAKPSVNGHQKAL.

The protein belongs to the LIMR family. Widely expressed with strongest expression in heart and pancreas.

It is found in the membrane. Putative membrane receptor. This Homo sapiens (Human) protein is Limb region 1 protein homolog (LMBR1).